The sequence spans 282 residues: Pantothenate synthetase (282 aa).

An ATP-binding site is contributed by 30-37 (MGNLHLGH). His-37 (proton donor) is an active-site residue. Gln-61 is a (R)-pantoate binding site. Gln-61 is a binding site for beta-alanine. Residue 149–152 (GQKD) participates in ATP binding. (R)-pantoate is bound at residue Gln-155. Residues Ile-178 and 186–189 (MSSR) contribute to the ATP site.

Belongs to the pantothenate synthetase family. Homodimer.

Its subcellular location is the cytoplasm. It carries out the reaction (R)-pantoate + beta-alanine + ATP = (R)-pantothenate + AMP + diphosphate + H(+). It participates in cofactor biosynthesis; (R)-pantothenate biosynthesis; (R)-pantothenate from (R)-pantoate and beta-alanine: step 1/1. In terms of biological role, catalyzes the condensation of pantoate with beta-alanine in an ATP-dependent reaction via a pantoyl-adenylate intermediate. This chain is Pantothenate synthetase, found in Shewanella piezotolerans (strain WP3 / JCM 13877).